The primary structure comprises 275 residues: Formamidopyrimidine-DNA glycosylase (275 aa).

Residue Pro-2 is the Schiff-base intermediate with DNA of the active site. The active-site Proton donor is the Glu-3. The active-site Proton donor; for beta-elimination activity is Lys-58. DNA-binding residues include His-93, Arg-111, and Arg-156. An FPG-type zinc finger spans residues 241–275; that stretch reads FVYDRAGQPCRVCGTPVRQIVQGQRSTYFCPTCQR. The Proton donor; for delta-elimination activity role is filled by Arg-265.

This sequence belongs to the FPG family. Monomer. It depends on Zn(2+) as a cofactor.

The catalysed reaction is Hydrolysis of DNA containing ring-opened 7-methylguanine residues, releasing 2,6-diamino-4-hydroxy-5-(N-methyl)formamidopyrimidine.. It catalyses the reaction 2'-deoxyribonucleotide-(2'-deoxyribose 5'-phosphate)-2'-deoxyribonucleotide-DNA = a 3'-end 2'-deoxyribonucleotide-(2,3-dehydro-2,3-deoxyribose 5'-phosphate)-DNA + a 5'-end 5'-phospho-2'-deoxyribonucleoside-DNA + H(+). Its function is as follows. Involved in base excision repair of DNA damaged by oxidation or by mutagenic agents. Acts as a DNA glycosylase that recognizes and removes damaged bases. Has a preference for oxidized purines, such as 7,8-dihydro-8-oxoguanine (8-oxoG). Has AP (apurinic/apyrimidinic) lyase activity and introduces nicks in the DNA strand. Cleaves the DNA backbone by beta-delta elimination to generate a single-strand break at the site of the removed base with both 3'- and 5'-phosphates. This Burkholderia cenocepacia (strain HI2424) protein is Formamidopyrimidine-DNA glycosylase.